The primary structure comprises 80 residues: Large ribosomal subunit protein eL13 (80 aa).

It belongs to the eukaryotic ribosomal protein eL13 family.

The polypeptide is Large ribosomal subunit protein eL13 (Aeropyrum pernix (strain ATCC 700893 / DSM 11879 / JCM 9820 / NBRC 100138 / K1)).